Consider the following 320-residue polypeptide: Cytochrome f (320 aa).

Residues 1–35 form the signal peptide; it reads MQTRKTLSWIKEEITRSISVSLMIYIITGAYISNA. Positions 36, 56, 59, and 60 each coordinate heme. A helical transmembrane segment spans residues 286–306; it reads VQGLLFFLASVILAQIFLVLK.

This sequence belongs to the cytochrome f family. In terms of assembly, the 4 large subunits of the cytochrome b6-f complex are cytochrome b6, subunit IV (17 kDa polypeptide, petD), cytochrome f and the Rieske protein, while the 4 small subunits are PetG, PetL, PetM and PetN. The complex functions as a dimer. Requires heme as cofactor.

Its subcellular location is the plastid. It is found in the chloroplast thylakoid membrane. Functionally, component of the cytochrome b6-f complex, which mediates electron transfer between photosystem II (PSII) and photosystem I (PSI), cyclic electron flow around PSI, and state transitions. In Populus trichocarpa (Western balsam poplar), this protein is Cytochrome f.